We begin with the raw amino-acid sequence, 346 residues long: UDP-3-O-acylglucosamine N-acyltransferase (346 aa).

The active-site Proton acceptor is the histidine 240.

Belongs to the transferase hexapeptide repeat family. LpxD subfamily. In terms of assembly, homotrimer.

It catalyses the reaction a UDP-3-O-[(3R)-3-hydroxyacyl]-alpha-D-glucosamine + a (3R)-hydroxyacyl-[ACP] = a UDP-2-N,3-O-bis[(3R)-3-hydroxyacyl]-alpha-D-glucosamine + holo-[ACP] + H(+). It participates in bacterial outer membrane biogenesis; LPS lipid A biosynthesis. In terms of biological role, catalyzes the N-acylation of UDP-3-O-acylglucosamine using 3-hydroxyacyl-ACP as the acyl donor. Is involved in the biosynthesis of lipid A, a phosphorylated glycolipid that anchors the lipopolysaccharide to the outer membrane of the cell. This chain is UDP-3-O-acylglucosamine N-acyltransferase, found in Bacteroides fragilis (strain YCH46).